Reading from the N-terminus, the 331-residue chain is Activator of 90 kDa heat shock protein ATPase homolog 2 (331 aa).

It belongs to the AHA1 family.

Its function is as follows. Co-chaperone that stimulates HSP90 ATPase activity. In Mus musculus (Mouse), this protein is Activator of 90 kDa heat shock protein ATPase homolog 2 (Ahsa2).